The following is a 223-amino-acid chain: Endonuclease NucS (223 aa).

Belongs to the NucS endonuclease family.

The protein localises to the cytoplasm. Cleaves both 3' and 5' ssDNA extremities of branched DNA structures. This is Endonuclease NucS from Streptomyces avermitilis (strain ATCC 31267 / DSM 46492 / JCM 5070 / NBRC 14893 / NCIMB 12804 / NRRL 8165 / MA-4680).